A 139-amino-acid chain; its full sequence is D-ribose pyranase (139 aa).

H20 functions as the Proton donor in the catalytic mechanism. Substrate contacts are provided by residues D28, H106, and 128–130 (YAN).

The protein belongs to the RbsD / FucU family. RbsD subfamily. Homodecamer.

The protein localises to the cytoplasm. The catalysed reaction is beta-D-ribopyranose = beta-D-ribofuranose. It functions in the pathway carbohydrate metabolism; D-ribose degradation; D-ribose 5-phosphate from beta-D-ribopyranose: step 1/2. Catalyzes the interconversion of beta-pyran and beta-furan forms of D-ribose. The polypeptide is D-ribose pyranase (Escherichia coli O81 (strain ED1a)).